A 911-amino-acid chain; its full sequence is Alpha-actinin-4 (911 aa).

Residues 1-30 (MVDYHAASQSYQYGPSSAGNGAGGGGSMGD) are disordered. Residues 1-269 (MVDYHAASQS…YVSSFYHAFS (269 aa)) are actin-binding. The tract at residues 12 to 26 (QYGPSSAGNGAGGGG) is interaction with VCL. Tyr-31 bears the Phosphotyrosine mark. The interval 40–61 (RDLLLDPAWEKQQRKTFTAWCN) is interaction with VCL. Calponin-homology (CH) domains lie at 50–154 (KQQR…LRFA) and 163–269 (TSAK…HAFS). The LXXLL motif motif lies at 84 to 88 (LMLLL). The interaction with VCL stretch occupies residues 108–126 (KINNVNKALDFIASKGVKL). An N6-acetyllysine modification is found at Lys-114. A polyphosphoinositide (PIP2)-binding region spans residues 177–192 (TAPYKNVNVQNFHISW). Lys-214 carries the post-translational modification N6-acetyllysine. Phosphothreonine is present on Thr-249. Spectrin repeat units lie at residues 293-403 (HLME…WLLN), 413-518 (HLAE…ALEK), 528-639 (QLHL…ALLE), and 649-752 (HLRR…EVEN). An N6-acetyllysine mark is found at Lys-592 and Lys-625. Ser-696 is modified (phosphoserine). A mediates interaction with MICALL2 region spans residues 736–911 (WEQLLTTIAR…STALYGESDL (176 aa)). EF-hand domains lie at 765–800 (EQMQ…LGYD) and 806–841 (QGEA…ETTD). Asp-778 serves as a coordination point for Ca(2+). Lys-779 carries the N6-acetyllysine modification. Ca(2+)-binding residues include Asp-780 and Glu-789. N6-acetyllysine is present on Lys-859. Residue Ser-909 is modified to Phosphoserine.

Belongs to the alpha-actinin family. Homodimer; antiparallel. Identified in a IGF2BP1-dependent mRNP granule complex containing untranslated mRNAs. Component of the CART complex, at least composed of ACTN4, HGS/HRS, MYO5B and TRIM3. Binds TRIM3 at the N-terminus. Interacts with MAGI1. Interacts with PDLIM2. Identified in a complex with CASK, IQGAP1, MAGI2, NPHS1, SPTAN1 and SPTBN1. Interacts with MICALL2 (preferentially in opened conformation); stimulated by RAB13 activation. Interacts with PPARG and RARA. Binds to VCL; this interaction triggers VCL conformational changes. Interacts with SEPTIN14. Interacts with IGSF8.

It localises to the nucleus. The protein resides in the cytoplasm. The protein localises to the cell junction. It is found in the cytoskeleton. Its subcellular location is the stress fiber. It localises to the perinuclear region. Functionally, F-actin cross-linking protein which is thought to anchor actin to a variety of intracellular structures. This is a bundling protein. Probably involved in vesicular trafficking via its association with the CART complex. The CART complex is necessary for efficient transferrin receptor recycling but not for EGFR degradation. Involved in tight junction assembly in epithelial cells probably through interaction with MICALL2. Links MICALL2 to the actin cytoskeleton and recruits it to the tight junctions. May also function as a transcriptional coactivator, stimulating transcription mediated by the nuclear hormone receptors PPARG and RARA. Association with IGSF8 regulates the immune synapse formation and is required for efficient T-cell activation. The polypeptide is Alpha-actinin-4 (Pongo abelii (Sumatran orangutan)).